The primary structure comprises 638 residues: Gamma-aminobutyric acid receptor subunit theta (638 aa).

The first 21 residues, 1 to 21, serve as a signal peptide directing secretion; the sequence is MGIRGMLRAAALLLLIRTWLA. The Extracellular segment spans residues 22–267; the sequence is ESNGPSPTPK…FQVQREVRSY (246 aa). N-linked (GlcNAc...) asparagine glycosylation occurs at asparagine 127. A disulfide bridge connects residues cysteine 183 and cysteine 197. The helical transmembrane segment at 268–288 threads the bilayer; the sequence is LVQVYWPTVLTTILSWISFWM. The Cytoplasmic segment spans residues 289–296; that stretch reads NYDSSAAR. Residues 297-314 traverse the membrane as a helical segment; that stretch reads VTIGLTSILVLTTIDSHM. Residues 315 to 325 are Extracellular-facing; that stretch reads RDKLPHISCIK. Residues 326–346 traverse the membrane as a helical segment; that stretch reads AIDIYILVCLFFVFLSLLEYV. Over 347–617 the chain is Cytoplasmic; sequence YINYLFFSQV…NRVPKVDRWS (271 aa). The tract at residues 491 to 515 is disordered; it reads ACDDEDSEESLSSEESHGHGSSHTG. Acidic residues predominate over residues 492–502; that stretch reads CDDEDSEESLS. A helical membrane pass occupies residues 618–638; that stretch reads RFLFPLSFGLFNVVYWLYHVY.

It belongs to the ligand-gated ion channel (TC 1.A.9) family. Gamma-aminobutyric acid receptor (TC 1.A.9.5) subfamily. GABRQ sub-subfamily. Heteropentamer, formed by a combination of alpha (GABRA1-6), beta (GABRB1-3), gamma (GABRG1-3), delta (GABRD), epsilon (GABRE), rho (GABRR1-3), pi (GABRP) and theta (GABRQ) chains, each subunit exhibiting distinct physiological and pharmacological properties. As to expression, expressed in brain, lung, and spleen.

Its subcellular location is the postsynaptic cell membrane. The protein localises to the cell membrane. It carries out the reaction chloride(in) = chloride(out). Potentiated by etomidate, propofol, pregnanolone and pentobarbital. Functionally, theta subunit of the heteropentameric ligand-gated chloride channel gated by gamma-aminobutyric acid (GABA), a major inhibitory neurotransmitter in the brain. GABA-gated chloride channels, also named GABA(A) receptors (GABAAR), consist of five subunits arranged around a central pore and contain GABA active binding site(s) located at the alpha and beta subunit interfaces. When activated by GABA, GABAARs selectively allow the flow of chloride anions across the cell membrane down their electrochemical gradient. The protein is Gamma-aminobutyric acid receptor subunit theta of Mus musculus (Mouse).